We begin with the raw amino-acid sequence, 264 residues long: ATP synthase subunit a (264 aa).

6 consecutive transmembrane segments (helical) span residues 29–49 (TWHIDSLFFSVGLGVLFLWIF), 90–110 (IAPLALTIFVWVFMMNFMDMI), 134–154 (DVNITFSLAIGVFLLIIFYSI), 177–197 (IPVNLLLETVTLIAKPISLAL), 208–228 (LIFILIALMYGTNLLLSTLGV), and 235–255 (LIFHILVITLQAFIFMMLTIV).

This sequence belongs to the ATPase A chain family. F-type ATPases have 2 components, CF(1) - the catalytic core - and CF(0) - the membrane proton channel. CF(1) has five subunits: alpha(3), beta(3), gamma(1), delta(1), epsilon(1). CF(0) has three main subunits: a(1), b(2) and c(9-12). The alpha and beta chains form an alternating ring which encloses part of the gamma chain. CF(1) is attached to CF(0) by a central stalk formed by the gamma and epsilon chains, while a peripheral stalk is formed by the delta and b chains.

It is found in the cell inner membrane. Its function is as follows. Key component of the proton channel; it plays a direct role in the translocation of protons across the membrane. The polypeptide is ATP synthase subunit a (Shewanella baltica (strain OS223)).